Here is a 506-residue protein sequence, read N- to C-terminus: Alpha-1,3/1,6-mannosyltransferase alg2 (506 aa).

The next 2 membrane-spanning stretches (helical) occupy residues 82-104 and 118-138; these read SIFG…MILL and LSTC…YCHF. A glycan (N-linked (GlcNAc...) asparagine) is linked at asparagine 299. A run of 2 helical transmembrane segments spans residues 443-463 and 481-501; these read LLAV…AATV and LGFM…TVYA.

The protein belongs to the glycosyltransferase group 1 family. Glycosyltransferase 4 subfamily.

Its subcellular location is the endoplasmic reticulum membrane. The catalysed reaction is a beta-D-Man-(1-&gt;4)-beta-D-GlcNAc-(1-&gt;4)-alpha-D-GlcNAc-diphospho-di-trans,poly-cis-dolichol + GDP-alpha-D-mannose = an alpha-D-Man-(1-&gt;3)-beta-D-Man-(1-&gt;4)-beta-D-GlcNAc-(1-&gt;4)-alpha-D-GlcNAc-diphospho-di-trans,poly-cis-dolichol + GDP + H(+). It carries out the reaction an alpha-D-Man-(1-&gt;3)-beta-D-Man-(1-&gt;4)-beta-D-GlcNAc-(1-&gt;4)-alpha-D-GlcNAc-diphospho-di-trans,poly-cis-dolichol + GDP-alpha-D-mannose = an alpha-D-Man-(1-&gt;3)-[alpha-D-Man-(1-&gt;6)]-beta-D-Man-(1-&gt;4)-beta-D-GlcNAc-(1-&gt;4)-alpha-D-GlcNAc-diphospho-di-trans,poly-cis-dolichol + GDP + H(+). Its pathway is protein modification; protein glycosylation. Its function is as follows. Mannosylates Man(2)GlcNAc(2)-dolichol diphosphate and Man(1)GlcNAc(2)-dolichol diphosphate to form Man(3)GlcNAc(2)-dolichol diphosphate. The protein is Alpha-1,3/1,6-mannosyltransferase alg2 (alg2) of Schizosaccharomyces pombe (strain 972 / ATCC 24843) (Fission yeast).